The chain runs to 377 residues: Lactosylceramide 1,3-N-acetyl-beta-D-glucosaminyltransferase (377 aa).

Topologically, residues 1–12 are cytoplasmic; that stretch reads MLISARRLRRCQ. A helical; Signal-anchor for type II membrane protein membrane pass occupies residues 13–30; it reads FFQLLTSCFVLSLMALLV. At 31–377 the chain is on the lumenal side; that stretch reads QEDNSLINHV…DTYPCSAAWS (347 aa). 3 N-linked (GlcNAc...) asparagine glycosylation sites follow: Asn56, Asn167, and Asn275.

The protein belongs to the glycosyltransferase 31 family.

Its subcellular location is the golgi apparatus membrane. It catalyses the reaction a beta-D-Gal-(1-&gt;4)-beta-D-Glc-(1&lt;-&gt;1)-Cer(d18:1(4E)) + UDP-N-acetyl-alpha-D-glucosamine = a beta-D-GlcNAc-(1-&gt;3)-beta-D-Gal-(1-&gt;4)-beta-D-Glc-(1&lt;-&gt;1)-Cer(d18:1(4E)) + UDP + H(+). The catalysed reaction is a neolactoside nLc4Cer(d18:1(4E)) + UDP-N-acetyl-alpha-D-glucosamine = a neolactoside IV(3)-beta-GlcNAc-nLc4Cer(d18:1(4E)) + UDP + H(+). Its pathway is protein modification; protein glycosylation. In terms of biological role, beta-1,3-N-acetylglucosaminyltransferase that plays a key role in the synthesis of lacto- or neolacto-series carbohydrate chains on glycolipids. This is Lactosylceramide 1,3-N-acetyl-beta-D-glucosaminyltransferase (b3gnt5) from Xenopus tropicalis (Western clawed frog).